A 292-amino-acid chain; its full sequence is Phosphoribulokinase, chromosomal (292 aa).

12–20 (GSSGAGTTS) is an ATP binding site.

The protein belongs to the phosphoribulokinase family. As to quaternary structure, homooctamer.

The enzyme catalyses D-ribulose 5-phosphate + ATP = D-ribulose 1,5-bisphosphate + ADP + H(+). It participates in carbohydrate biosynthesis; Calvin cycle. This is Phosphoribulokinase, chromosomal (cfxP) from Cupriavidus necator (strain ATCC 17699 / DSM 428 / KCTC 22496 / NCIMB 10442 / H16 / Stanier 337) (Ralstonia eutropha).